The primary structure comprises 475 residues: ATP synthase subunit beta (475 aa).

160 to 167 (GGAGVGKT) is an ATP binding site.

The protein belongs to the ATPase alpha/beta chains family. In terms of assembly, F-type ATPases have 2 components, CF(1) - the catalytic core - and CF(0) - the membrane proton channel. CF(1) has five subunits: alpha(3), beta(3), gamma(1), delta(1), epsilon(1). CF(0) has three main subunits: a(1), b(2) and c(9-12). The alpha and beta chains form an alternating ring which encloses part of the gamma chain. CF(1) is attached to CF(0) by a central stalk formed by the gamma and epsilon chains, while a peripheral stalk is formed by the delta and b chains.

The protein localises to the cell membrane. It catalyses the reaction ATP + H2O + 4 H(+)(in) = ADP + phosphate + 5 H(+)(out). Produces ATP from ADP in the presence of a proton gradient across the membrane. The catalytic sites are hosted primarily by the beta subunits. The protein is ATP synthase subunit beta of Mycolicibacterium vanbaalenii (strain DSM 7251 / JCM 13017 / BCRC 16820 / KCTC 9966 / NRRL B-24157 / PYR-1) (Mycobacterium vanbaalenii).